A 258-amino-acid polypeptide reads, in one-letter code: L-rhamnose-1-dehydrogenase (258 aa).

The NADP(+) site is built by Ile19, Asp68, and Asn95. Catalysis depends on proton donor residues Ser147 and Tyr161. Positions 161, 165, 194, and 196 each coordinate NADP(+). The active-site Lowers pKa of active site Tyr is the Lys165.

This sequence belongs to the short-chain dehydrogenases/reductases (SDR) family.

It catalyses the reaction L-rhamnofuranose + NAD(+) = L-rhamnono-1,4-lactone + NADH + H(+). Its function is as follows. NAD-dependent dehydrogenase that has high activity with L-rhamnose and L-lyxose, and shows only low activity with L-mannose. Has no activity with NADP. Catalyzes the first step in an alternative pathway for rhamnose utilization that does not involve phosphorylated intermediates. This Scheffersomyces stipitis (strain ATCC 58785 / CBS 6054 / NBRC 10063 / NRRL Y-11545) (Yeast) protein is L-rhamnose-1-dehydrogenase (DHG2).